Reading from the N-terminus, the 247-residue chain is Acyl-coenzyme A thioesterase THEM5 (247 aa).

The Proton donor/acceptor role is filled by Asp-167.

Belongs to the THEM4/THEM5 thioesterase family. In terms of assembly, homodimer.

Its subcellular location is the mitochondrion matrix. It catalyses the reaction hexadecanoyl-CoA + H2O = hexadecanoate + CoA + H(+). The enzyme catalyses (9Z,12Z)-octadecadienoyl-CoA + H2O = (9Z,12Z)-octadecadienoate + CoA + H(+). It carries out the reaction tetradecanoyl-CoA + H2O = tetradecanoate + CoA + H(+). The catalysed reaction is (9Z)-octadecenoyl-CoA + H2O = (9Z)-octadecenoate + CoA + H(+). It catalyses the reaction (9Z)-hexadecenoyl-CoA + H2O = (9Z)-hexadecenoate + CoA + H(+). The enzyme catalyses (5Z,8Z,11Z,14Z)-eicosatetraenoyl-CoA + H2O = (5Z,8Z,11Z,14Z)-eicosatetraenoate + CoA + H(+). It carries out the reaction octadecanoyl-CoA + H2O = octadecanoate + CoA + H(+). Its function is as follows. Has acyl-CoA thioesterase activity towards long-chain (C16 and C18) fatty acyl-CoA substrates, with a preference for linoleoyl-CoA and other unsaturated long-chain fatty acid-CoA esters. Plays an important role in mitochondrial fatty acid metabolism, and in remodeling of the mitochondrial lipid cardiolipin. Required for normal mitochondrial function. The sequence is that of Acyl-coenzyme A thioesterase THEM5 (THEM5) from Homo sapiens (Human).